We begin with the raw amino-acid sequence, 109 residues long: Nucleoid-associated protein SO_2014 (109 aa).

Belongs to the YbaB/EbfC family. As to quaternary structure, homodimer.

It is found in the cytoplasm. It localises to the nucleoid. Its function is as follows. Binds to DNA and alters its conformation. May be involved in regulation of gene expression, nucleoid organization and DNA protection. The sequence is that of Nucleoid-associated protein SO_2014 from Shewanella oneidensis (strain ATCC 700550 / JCM 31522 / CIP 106686 / LMG 19005 / NCIMB 14063 / MR-1).